Here is a 388-residue protein sequence, read N- to C-terminus: Pepsin A (388 aa).

The first 15 residues, 1–15 (MKWLLLLGLVALSEC), serve as a signal peptide directing secretion. A propeptide spans 16–62 (IIYKVPLVRKKSLRRNLSEHGLLKDFLKKHNRNPASKYFPQTEAPTL) (activation peptide). Residues 76–385 (YFGTIGIGTP…DRANNQVGLA (310 aa)) form the Peptidase A1 domain. Residue Asp94 is part of the active site. The cysteines at positions 107 and 112 are disulfide-linked. Phosphoserine is present on Ser130. A disulfide bridge links Cys268 with Cys272. The active site involves Asp277. An intrachain disulfide couples Cys311 to Cys344.

Belongs to the peptidase A1 family.

The protein resides in the secreted. It carries out the reaction Preferential cleavage: hydrophobic, preferably aromatic, residues in P1 and P1' positions. Cleaves 1-Phe-|-Val-2, 4-Gln-|-His-5, 13-Glu-|-Ala-14, 14-Ala-|-Leu-15, 15-Leu-|-Tyr-16, 16-Tyr-|-Leu-17, 23-Gly-|-Phe-24, 24-Phe-|-Phe-25 and 25-Phe-|-Tyr-26 bonds in the B chain of insulin.. Functionally, shows particularly broad specificity; although bonds involving phenylalanine and leucine are preferred, many others are also cleaved to some extent. The polypeptide is Pepsin A (PGA) (Macaca mulatta (Rhesus macaque)).